The chain runs to 352 residues: MPFSLVRIDEDDVLEYVFERYTAINSDADSIRQDLGIQDSKSTTLNIEIAPPKSLINDTNITKKGKKKKGNKSSSDYDFYSFEIKQNVTSLHSTRDNDNSTTGYVLWSLTPVFCEWLLYNEQASPLHRAQMVNICSLEKKIIHDIEFPSLLNEDTTVIELGSGISSVLPILCSNFVGTYICTDQRGILNGLKQNIANNLDLVNKRTIVSETLDISNIQEQPTNSDDETIPIKPTTQLEVAILDWETFPKSIKSGSSNILTDFVKPHGTIFLLALDVIYNEYLINPFLHTLHSIMFYYKNQREIVALVGIHLRSDDIVQEFLEKVTTEFPFKLHVVDDPQWSHSRYDIYYITL.

S-adenosyl-L-methionine is bound by residues Trp-107, 161–163 (GSG), Asp-183, Trp-244, and Leu-274.

It belongs to the class I-like SAM-binding methyltransferase superfamily. RKM5 family.

In terms of biological role, S-adenosyl-L-methionine-dependent protein-lysine N-methyltransferase that methylates 60S ribosomal protein L1. The protein is Ribosomal lysine N-methyltransferase 5 (RKM5) of Candida glabrata (strain ATCC 2001 / BCRC 20586 / JCM 3761 / NBRC 0622 / NRRL Y-65 / CBS 138) (Yeast).